We begin with the raw amino-acid sequence, 556 residues long: Genetic interactor of prohibitins 3, mitochondrial (556 aa).

Residues 1-21 (MLNLCHALRGVRQFSCSVIVK) constitute a mitochondrion transit peptide. The CP-type G domain occupies 113–305 (ESTLNDILNY…LFDLPGYSTS (193 aa)).

It belongs to the TRAFAC class YlqF/YawG GTPase family. GEP3 subfamily.

The protein resides in the mitochondrion. In terms of biological role, interacts genetically with prohibitins and thus may be involved in the mitochondrial lipid metabolism. In Saccharomyces cerevisiae (strain YJM789) (Baker's yeast), this protein is Genetic interactor of prohibitins 3, mitochondrial (GEP3).